A 400-amino-acid chain; its full sequence is Phosphoglycerate kinase (400 aa).

Substrate is bound by residues 24 to 26 (DFN), arginine 40, 63 to 66 (HFGR), arginine 121, and arginine 154. Residues lysine 205, glycine 296, glutamate 327, and 356-359 (GGDS) each bind ATP.

The protein belongs to the phosphoglycerate kinase family. As to quaternary structure, monomer.

The protein resides in the cytoplasm. The catalysed reaction is (2R)-3-phosphoglycerate + ATP = (2R)-3-phospho-glyceroyl phosphate + ADP. The protein operates within carbohydrate degradation; glycolysis; pyruvate from D-glyceraldehyde 3-phosphate: step 2/5. This chain is Phosphoglycerate kinase, found in Thermosynechococcus vestitus (strain NIES-2133 / IAM M-273 / BP-1).